Consider the following 1159-residue polypeptide: Reverse gyrase 2 (1159 aa).

The segment at 1-40 (MALELIERGCPNCGGVISSDRLEKGLPCSKCLPKPTEEKV) adopts an RG N-terminal-type zinc-finger fold. The Zn(2+) site is built by cysteine 10, cysteine 13, cysteine 28, and cysteine 31. ATP is bound by residues glutamine 82 and 99-106 (APTGVGKT). Residues 86–275 (AKRVFMNQSF…LFRNLLGFDV (190 aa)) form the Helicase ATP-binding domain. Positions 196–199 (DDID) match the DEAD box motif. Residues 583–1159 (DLFKTTLVIV…LLKEEKAFKK (577 aa)) form a topoisomerase I region. The 157-residue stretch at 587–743 (TTLVIVESPN…NIKRAEFHEV (157 aa)) folds into the Toprim domain. Glutamate 593 and aspartate 712 together coordinate Mg(2+). The Topo IA-type catalytic domain occupies 759–1152 (DLNLVKAQLV…EVHRIKVLLK (394 aa)). Tyrosine 902 acts as the O-(5'-phospho-DNA)-tyrosine intermediate in catalysis.

The protein in the N-terminal section; belongs to the DEAD box helicase family. DDVD subfamily. In the C-terminal section; belongs to the type IA topoisomerase family. In terms of assembly, monomer. Zn(2+) serves as cofactor. Requires Mg(2+) as cofactor.

It is found in the cytoplasm. It catalyses the reaction ATP + H2O = ADP + phosphate + H(+). Modifies the topological state of DNA by introducing positive supercoils in an ATP-dependent process, increasing the linking number in steps of +1. Binds to single-stranded DNA, transiently cleaves and then rejoins the ends, introducing a positive supercoil in the process. The scissile phosphodiester is attacked by the catalytic tyrosine of the enzyme, resulting in the formation of a DNA-(5'-phosphotyrosyl)-enzyme intermediate. Probably involved in rewinding DNA strands in regions of the chromosome that have opened up to allow replication, transcription, DNA repair and/or for DNA protection. This Aquifex aeolicus (strain VF5) protein is Reverse gyrase 2.